The chain runs to 627 residues: Altered inheritance of mitochondria protein 9, mitochondrial (627 aa).

The transit peptide at 1-43 (MIRYTVAGHSRRCVVGASKRVGAIKCITVAATKRFISNKPNEV) directs the protein to the mitochondrion.

It belongs to the AIM9 family.

It localises to the mitochondrion. This chain is Altered inheritance of mitochondria protein 9, mitochondrial (AIM9), found in Saccharomyces cerevisiae (strain ATCC 204508 / S288c) (Baker's yeast).